The chain runs to 176 residues: N5-carboxyaminoimidazole ribonucleotide mutase (176 aa).

Substrate-binding residues include Ser14, Asp17, and Arg44.

This sequence belongs to the AIR carboxylase family. Class I subfamily.

The enzyme catalyses 5-carboxyamino-1-(5-phospho-D-ribosyl)imidazole + H(+) = 5-amino-1-(5-phospho-D-ribosyl)imidazole-4-carboxylate. It functions in the pathway purine metabolism; IMP biosynthesis via de novo pathway; 5-amino-1-(5-phospho-D-ribosyl)imidazole-4-carboxylate from 5-amino-1-(5-phospho-D-ribosyl)imidazole (N5-CAIR route): step 2/2. In terms of biological role, catalyzes the conversion of N5-carboxyaminoimidazole ribonucleotide (N5-CAIR) to 4-carboxy-5-aminoimidazole ribonucleotide (CAIR). In Synechocystis sp. (strain ATCC 27184 / PCC 6803 / Kazusa), this protein is N5-carboxyaminoimidazole ribonucleotide mutase.